Consider the following 270-residue polypeptide: Acyl-[acyl-carrier-protein]--UDP-N-acetylglucosamine O-acyltransferase (270 aa).

The protein belongs to the transferase hexapeptide repeat family. LpxA subfamily. In terms of assembly, homotrimer.

It localises to the cytoplasm. It catalyses the reaction a (3R)-hydroxyacyl-[ACP] + UDP-N-acetyl-alpha-D-glucosamine = a UDP-3-O-[(3R)-3-hydroxyacyl]-N-acetyl-alpha-D-glucosamine + holo-[ACP]. Its pathway is glycolipid biosynthesis; lipid IV(A) biosynthesis; lipid IV(A) from (3R)-3-hydroxytetradecanoyl-[acyl-carrier-protein] and UDP-N-acetyl-alpha-D-glucosamine: step 1/6. Its function is as follows. Involved in the biosynthesis of lipid A, a phosphorylated glycolipid that anchors the lipopolysaccharide to the outer membrane of the cell. In Sinorhizobium medicae (strain WSM419) (Ensifer medicae), this protein is Acyl-[acyl-carrier-protein]--UDP-N-acetylglucosamine O-acyltransferase.